The sequence spans 813 residues: Ubiquitin carboxyl-terminal hydrolase 45 (813 aa).

A compositionally biased stretch (basic and acidic residues) spans 1 to 14 (MRVKDPSKDLPEKG). The disordered stretch occupies residues 1–27 (MRVKDPSKDLPEKGKRNKRPLLPHDED). The tract at residues 1-62 (MRVKDPSKDL…AVAESLWSVC (62 aa)) is interaction with ERCC1. Serine 28 and serine 29 each carry phosphoserine. The UBP-type zinc finger occupies 36–153 (LTCQHVSYAV…AQIVDFLQKH (118 aa)). Residues cysteine 38, histidine 40, cysteine 62, cysteine 65, cysteine 85, cysteine 88, cysteine 93, histidine 101, histidine 105, histidine 114, cysteine 127, and cysteine 130 each coordinate Zn(2+). Residues 191 to 812 (KGITNLGNTC…QAYLLFYERI (622 aa)) enclose the USP domain. Cysteine 200 (nucleophile) is an active-site residue. 2 stretches are compositionally biased toward basic and acidic residues: residues 405–414 (LQETDQDHNK) and 450–466 (WPSE…KNDN). Residues 405 to 552 (LQETDQDHNK…QAKETHGGEE (148 aa)) form a disordered region. Polar residues predominate over residues 472–488 (PASTLSTEASLNESLTD). Phosphoserine is present on residues serine 507 and serine 525. Over residues 521 to 533 (SRGDSCGHAEQHP) the composition is skewed to basic and acidic residues. Histidine 745 serves as the catalytic Proton acceptor.

This sequence belongs to the peptidase C19 family. In terms of assembly, interacts with ERCC1. The catalytically active form interacts with SPDL1. In terms of tissue distribution, retina.

The protein localises to the photoreceptor inner segment. The protein resides in the cytoplasm. Its subcellular location is the nucleus. It carries out the reaction Thiol-dependent hydrolysis of ester, thioester, amide, peptide and isopeptide bonds formed by the C-terminal Gly of ubiquitin (a 76-residue protein attached to proteins as an intracellular targeting signal).. Functionally, catalyzes the deubiquitination of SPDL1. Plays a role in the repair of UV-induced DNA damage via deubiquitination of ERCC1, promoting its recruitment to DNA damage sites. May be involved in the maintenance of photoreceptor function. May play a role in normal retinal development. Plays a role in cell migration. The sequence is that of Ubiquitin carboxyl-terminal hydrolase 45 (Usp45) from Mus musculus (Mouse).